Here is a 454-residue protein sequence, read N- to C-terminus: C4-dicarboxylate transport protein (454 aa).

A run of 9 helical transmembrane segments spans residues 33–53 (VQVLAAIAAGILLGHFYPDIG), 66–86 (LVKMIIAPVIFLTVATGIAGM), 101–121 (IYFLAFSTLALLVGLVVANLV), 148–168 (EQSITGFLMNIIPTTLVGAFA), 170–190 (GDILQVLFISVLFGISLAIVG), 210–230 (LVAILMKAAPIGAFGAMAFTI), 243–263 (MLIGTFYLTSFLFVFVVLGAV), 354–374 (LLLVAMLSSKGAAGITGAGFI), and 377–397 (AATLSVVPSVPVAGMALILGI).

Belongs to the dicarboxylate/amino acid:cation symporter (DAACS) (TC 2.A.23) family.

It is found in the cell inner membrane. In terms of biological role, responsible for the transport of dicarboxylates such as succinate, fumarate, and malate from the periplasm across the membrane. The protein is C4-dicarboxylate transport protein of Sinorhizobium medicae (strain WSM419) (Ensifer medicae).